The primary structure comprises 107 residues: Sulfurtransferase Alvin_2599 (107 aa).

In terms of domain architecture, Rhodanese spans 16 to 104 (DTEDVLLVDI…WARHGLPIVA (89 aa)). Cysteine 64 functions as the Cysteine persulfide intermediate in the catalytic mechanism.

In terms of assembly, monomer.

It localises to the cytoplasm. It participates in energy metabolism; sulfur metabolism. In terms of biological role, sulfur carrier protein involved in sulfur trafficking for oxidative dissimilatory sulfur metabolism. Component of a sulfur relay system that starts with the sulfur-mobilizing rhodanese-like protein Rhd_2599 (Alvin_2599), which transfers the sulfur from a low-molecular-weight thiol, maybe glutathione, to the TusA protein (Alvin_2600); TusA serves as the sulfur donor for DsrEFH, which persulfurates DsrC; persulfurated DsrC very probably serves as a direct substrate for reverse-acting sulfite reductase, DsrAB. Is able to catalyze the sulfur transfer reaction from thiosulfate or glutathione (GSSH) to cyanide in vitro, however, thiosulfate is unlikely an in vivo substrate. This is Sulfurtransferase Alvin_2599 from Allochromatium vinosum (strain ATCC 17899 / DSM 180 / NBRC 103801 / NCIMB 10441 / D) (Chromatium vinosum).